Consider the following 202-residue polypeptide: Small ribosomal subunit protein uS4 (202 aa).

Positions 22-43 are disordered; that stretch reads TRKSARRAYPPGQHGQNRRKRS. One can recognise an S4 RNA-binding domain in the interval 90–152; it reads MRLDNTVFRL…EKSKEMVKTN (63 aa).

Belongs to the universal ribosomal protein uS4 family. As to quaternary structure, part of the 30S ribosomal subunit. Contacts protein S5. The interaction surface between S4 and S5 is involved in control of translational fidelity.

One of the primary rRNA binding proteins, it binds directly to 16S rRNA where it nucleates assembly of the body of the 30S subunit. In terms of biological role, with S5 and S12 plays an important role in translational accuracy. The polypeptide is Small ribosomal subunit protein uS4 (Trichodesmium erythraeum (strain IMS101)).